Reading from the N-terminus, the 1059-residue chain is MNFQLKNFLILKTLKTFYIEYYKVLIYYLINSIKNYLGDKLYLYYKKNKYTIYILSDFLFFKTTNLTSNITDTVQEFNSKILIFLPLKIKNLKNNKYKIIYYLLGEIPKYTIEKNLIINGLKKTFISKLMFNYIGIFFNKFIKNNNNILYAKIIFNDKFIINIVLEENKCYCIFNNYKYDLICFLYLLGISMQDIFIFSRYNKSFYLKKLLLTLPSLNINNIINYNIFKYLSFFFNLSFKLNTYYIFNKVLNKNNSLYSYIKNFSNSNNLIALDFINILDILLDIKYNKKNITDLDLLEYRSIFTLGNYFTNQYSFYLKKFSNILHNDIFKCIKNLEKYKLNTNSFKSKLYFNLKEYLTVNPLVQYLEQINSFSEIIHKNRVTNYNSKLKQNLQIRNINLNQLGSLCLIDTTEGINCGLVISFTKNIKIEKRNNFQFPYLPVLNIKTKNFITFINSFLQQTYIVLFNNYYLRKNKLFNFFNLSLNKNSFKLKNISIQNMIYIKPMDMFSFAENLIPFIFYNDPARVLMGAKMQSQIVPILKNKRSIIITGYEKNLLNSTNLILKAYQEGIVVYVSSYKIIIRDLYNRKITYFLDKYKRSNHFTILHSKPNVWQGERIFCGQILTSTQDILFSEYIGGNNLLVSYGNFFGYNFEDAIVLNKKIIYSQLFTSLHFKVYEIIFNSLNKFSFEISTINLPKKSFYSKRNLDFFGIIKEGSKVLNNDILVSKIFITNINISLLPLYNLIYILFGKEIKNIKDKSILVSFGNSGRIVKTELFSYSSKIKSYLGYYLKCRVYICKQRLLSVGDKLCGRYGNKGIIAYILPSNDLPYTNTGIIPDIISDSLGIPSRMNIGQLFENLFGLSCYFLNKRLCISNTFNLPKVYIKTILYNYINNIKEKSGNLWIYNSYSPGKILLRDGRQGYKLSEPSFLGISKYSKLIHMIKDKIHYRTIGPYTELMQQPVKGRNKKGGQRFGEMEIWAIEAYGSSYNLRELLNYKSDDIIARTSLLSNLDNNIILDNITTTESFRTLIREIHSMNLNIEAFSSIDQLEGKILPININF.

The protein belongs to the RNA polymerase beta chain family. In terms of assembly, in plastids the minimal PEP RNA polymerase catalytic core is composed of four subunits: alpha, beta, beta', and beta''. When a (nuclear-encoded) sigma factor is associated with the core the holoenzyme is formed, which can initiate transcription (Potential).

The protein resides in the plastid. The protein localises to the apicoplast. The catalysed reaction is RNA(n) + a ribonucleoside 5'-triphosphate = RNA(n+1) + diphosphate. Functionally, DNA-dependent RNA polymerase catalyzes the transcription of DNA into RNA using the four ribonucleoside triphosphates as substrates. In Eimeria tenella (Coccidian parasite), this protein is DNA-directed RNA polymerase subunit beta (rpoB).